Here is a 698-residue protein sequence, read N- to C-terminus: Auxin response factor 22 (698 aa).

Residues 128-230 (FAKTLTQSDA…ELCVGIRRAK (103 aa)) constitute a DNA-binding region (TF-B3). The segment covering 549–577 (TSSGSTETLSPGVTGNSSPNGNAHKTGNA) has biased composition (polar residues). Residues 549-579 (TSSGSTETLSPGVTGNSSPNGNAHKTGNASD) form a disordered region. Residues 603-683 (AGHCKVFMES…RRLTIIAGDR (81 aa)) form the PB1 domain.

This sequence belongs to the ARF family. Homodimers and heterodimers. In terms of tissue distribution, expressed in roots, culms, leaves and young panicles.

It is found in the nucleus. Auxin response factors (ARFs) are transcriptional factors that bind specifically to the DNA sequence 5'-TGTCTC-3' found in the auxin-responsive promoter elements (AuxREs). This chain is Auxin response factor 22 (ARF22), found in Oryza sativa subsp. japonica (Rice).